Here is a 477-residue protein sequence, read N- to C-terminus: Polyketide synthase-related protein Dhc1 (477 aa).

In terms of domain architecture, Carrier spans 34 to 112; it reads EKMTVREGEL…AMTHCVFDRA (79 aa). Serine 72 carries the O-(pantetheine 4'-phosphoryl)serine modification. Positions 161 to 322 are ketoreductase (KR) domain; the sequence is LTGATSFLGS…AGEVFLENLV (162 aa). The interval 410-435 is disordered; the sequence is VQQQQQQQQRQSQPPRDDAADGSPTE. Over residues 411-422 the composition is skewed to low complexity; sequence QQQQQQQQRQSQ. Positions 424 to 435 are enriched in basic and acidic residues; that stretch reads PRDDAADGSPTE.

It participates in mycotoxin biosynthesis. Its function is as follows. Polyketide synthase-related protein; part of the gene cluster that mediates the biosynthesis of 10,11-dehydrocurvularin, a prevalent fungal phytotoxin with heat shock response and immune-modulatory activities. The highly reducing polyketide synthase Dhc3 is responsible for biosynthesis up to the tetraketide stage. The non-reducing polyketide synthase Dhc5 then conducts four additional chain extension cycles, producing the unreduced part of the nascent octaketide from C-1 to C-8 in 10,11-dehydrocurvularin. The role of Dhc1 in 10,11-dehydrocurvularin biosynthesis has not been identified yet. In Alternaria cinerariae, this protein is Polyketide synthase-related protein Dhc1.